The primary structure comprises 67 residues: Potassium channel toxin alpha-KTx 6.16 (67 aa).

Positions 1–24 (MNLKLALVLLLTVINVGMLPGATS) are cleaved as a signal peptide. Cystine bridges form between C34–C55, C40–C60, C44–C62, and C50–C65.

Belongs to the short scorpion toxin superfamily. Potassium channel inhibitor family. Alpha-KTx 06 subfamily. Expressed by the venom gland.

The protein localises to the secreted. Functionally, inhibits voltage-gated potassium channels. The sequence is that of Potassium channel toxin alpha-KTx 6.16 from Opisthacanthus cayaporum (South American scorpion).